A 933-amino-acid chain; its full sequence is Valine--tRNA ligase (933 aa).

Residues 1 to 24 form a disordered region; sequence MIERVKTTKLSEASGLPKTYDPVG. Residues 57-67 carry the 'HIGH' region motif; it reads PNVTGSLHMGH. A 'KMSKS' region motif is present at residues 557–561; that stretch reads KMSKS. K560 contacts ATP. The stretch at 866 to 932 forms a coiled coil; it reads LIDIASLRSR…RLVKERLMGL (67 aa).

Belongs to the class-I aminoacyl-tRNA synthetase family. ValS type 1 subfamily. As to quaternary structure, monomer.

The protein resides in the cytoplasm. The enzyme catalyses tRNA(Val) + L-valine + ATP = L-valyl-tRNA(Val) + AMP + diphosphate. In terms of biological role, catalyzes the attachment of valine to tRNA(Val). As ValRS can inadvertently accommodate and process structurally similar amino acids such as threonine, to avoid such errors, it has a 'posttransfer' editing activity that hydrolyzes mischarged Thr-tRNA(Val) in a tRNA-dependent manner. This is Valine--tRNA ligase from Prochlorococcus marinus (strain NATL2A).